We begin with the raw amino-acid sequence, 167 residues long: Large ribosomal subunit protein uL10 (167 aa).

Belongs to the universal ribosomal protein uL10 family. As to quaternary structure, part of the ribosomal stalk of the 50S ribosomal subunit. The N-terminus interacts with L11 and the large rRNA to form the base of the stalk. The C-terminus forms an elongated spine to which L12 dimers bind in a sequential fashion forming a multimeric L10(L12)X complex.

In terms of biological role, forms part of the ribosomal stalk, playing a central role in the interaction of the ribosome with GTP-bound translation factors. This is Large ribosomal subunit protein uL10 from Psychromonas ingrahamii (strain DSM 17664 / CCUG 51855 / 37).